Reading from the N-terminus, the 558-residue chain is TNF receptor-associated factor 5 (558 aa).

An RING-type zinc finger spans residues 45 to 85 (CAFCHSVLHNPHQTGCGHRFCQQCIRSLRELNSVPICPVDK). 2 TRAF-type zinc fingers span residues 127-181 (DHLQ…TNLQ) and 182-239 (DHEE…GNLL). The stretch at 252–302 (LVLEKNYQLEQRISDLYQSLEQKESKIQQLAETVKKFEKELKQFTQMFGRN) forms a coiled coil. A Glycyl lysine isopeptide (Lys-Gly) (interchain with G-Cter in ubiquitin) cross-link involves residue Lys-318. Residues 340 to 400 (LDLRSLVDAV…EERFKQLEGA (61 aa)) adopt a coiled-coil conformation. The interaction with EIF2AK2/PKR stretch occupies residues 345-558 (LVDAVDSVKQ…AVDLTDLEDL (214 aa)). The MATH domain occupies 403–550 (SGKLIWKVTD…DDTLFLKVAV (148 aa)).

This sequence belongs to the TNF receptor-associated factor family. A subfamily. Homotrimer. Heterotrimer with TRAF3. Associates with TNFRSF5/CD40 through interaction with TRAF3. Associates with LTBR/TNFRSF3, TNFRSF4, TNFRSF8/CD30, TNFRSF11A/RANK, TNFRSF13B/TACI, TNFRSF14, TNFRSF17, TNFRSF19/TROY, RIPK2, MAP3K14, MAP3K5, and TRAF and TNF receptor associated protein TDP2. Interacts (via C-terminus) with EIF2AK2/PKR (via the kinase catalytic domain). Post-translationally, ubiquitinated at Lys-318 by the SCF(FBXL2) complex, leading to its degradation by the proteasome.

The protein resides in the cytoplasm. Its subcellular location is the cytosol. Its function is as follows. Adapter protein and signal transducer that links members of the tumor necrosis factor receptor family to different signaling pathways by association with the receptor cytoplasmic domain and kinases. Mediates activation of NF-kappa-B and probably JNK. Seems to be involved in apoptosis. Plays a role in mediating activation of NF-kappa-B by EIF2AK2/PKR. The sequence is that of TNF receptor-associated factor 5 (Traf5) from Mus musculus (Mouse).